The following is a 351-amino-acid chain: L-threonine 3-dehydrogenase (351 aa).

Zn(2+) is bound at residue Cys39. Residues Thr41 and His44 each act as charge relay system in the active site. His64, Glu65, Cys94, Cys97, Cys100, and Cys108 together coordinate Zn(2+). Residues Ile176, Asp196, Arg201, 271–273 (LGI), and 295–296 (IY) contribute to the NAD(+) site.

It belongs to the zinc-containing alcohol dehydrogenase family. In terms of assembly, homotetramer. Requires Zn(2+) as cofactor.

The protein localises to the cytoplasm. The catalysed reaction is L-threonine + NAD(+) = (2S)-2-amino-3-oxobutanoate + NADH + H(+). Its pathway is amino-acid degradation; L-threonine degradation via oxydo-reductase pathway; glycine from L-threonine: step 1/2. In terms of biological role, catalyzes the NAD(+)-dependent oxidation of L-threonine to 2-amino-3-ketobutyrate. This chain is L-threonine 3-dehydrogenase, found in Francisella tularensis subsp. novicida (strain U112).